Consider the following 293-residue polypeptide: Cytidine deaminase 6 (293 aa).

CMP/dCMP-type deaminase domains lie at 16 to 147 (RGPS…FGPD) and 178 to 293 (EDCS…TNKN). 57–59 (NVE) is a substrate binding site. A Zn(2+)-binding site is contributed by H70. The Proton donor role is filled by E72. Residues C103 and C106 each coordinate Zn(2+).

It belongs to the cytidine and deoxycytidylate deaminase family. As to quaternary structure, homodimer. The cofactor is Zn(2+).

It catalyses the reaction cytidine + H2O + H(+) = uridine + NH4(+). The enzyme catalyses 2'-deoxycytidine + H2O + H(+) = 2'-deoxyuridine + NH4(+). This enzyme scavenges exogenous and endogenous cytidine and 2'-deoxycytidine for UMP synthesis. The sequence is that of Cytidine deaminase 6 (CDA6) from Arabidopsis thaliana (Mouse-ear cress).